The chain runs to 609 residues: Proteasome-associated ATPase (609 aa).

The disordered stretch occupies residues 1–22 (MGESERSEAFNPPREAGMSSGD). Residues 20–96 (SGDIAELEQL…LREEVDRLGQ (77 aa)) are a coiled coil. 296-301 (GCGKTL) is a binding site for ATP. The docks into pockets in the proteasome alpha-ring stretch occupies residues 608–609 (YL).

Belongs to the AAA ATPase family. Homohexamer. Assembles into a hexameric ring structure that caps the 20S proteasome core. Strongly interacts with the prokaryotic ubiquitin-like protein Pup through a hydrophobic interface; the interacting region of ARC lies in its N-terminal coiled-coil domain. There is one Pup binding site per ARC hexamer ring. Upon ATP-binding, the C-terminus of ARC interacts with the alpha-rings of the proteasome core, possibly by binding to the intersubunit pockets.

It functions in the pathway protein degradation; proteasomal Pup-dependent pathway. ATPase which is responsible for recognizing, binding, unfolding and translocation of pupylated proteins into the bacterial 20S proteasome core particle. May be essential for opening the gate of the 20S proteasome via an interaction with its C-terminus, thereby allowing substrate entry and access to the site of proteolysis. Thus, the C-termini of the proteasomal ATPase may function like a 'key in a lock' to induce gate opening and therefore regulate proteolysis. This chain is Proteasome-associated ATPase, found in Mycobacterium leprae (strain Br4923).